The primary structure comprises 287 residues: tRNA-cytidine(32) 2-sulfurtransferase (287 aa).

The short motif at 58–63 (SGGKDS) is the PP-loop motif element. 3 residues coordinate [4Fe-4S] cluster: Cys-133, Cys-136, and Cys-224.

The protein belongs to the TtcA family. Homodimer. Requires Mg(2+) as cofactor. The cofactor is [4Fe-4S] cluster.

The protein localises to the cytoplasm. The catalysed reaction is cytidine(32) in tRNA + S-sulfanyl-L-cysteinyl-[cysteine desulfurase] + AH2 + ATP = 2-thiocytidine(32) in tRNA + L-cysteinyl-[cysteine desulfurase] + A + AMP + diphosphate + H(+). Its pathway is tRNA modification. Its function is as follows. Catalyzes the ATP-dependent 2-thiolation of cytidine in position 32 of tRNA, to form 2-thiocytidine (s(2)C32). The sulfur atoms are provided by the cysteine/cysteine desulfurase (IscS) system. The protein is tRNA-cytidine(32) 2-sulfurtransferase of Dinoroseobacter shibae (strain DSM 16493 / NCIMB 14021 / DFL 12).